The chain runs to 396 residues: Actin-related protein 6 (396 aa).

T2 bears the N-acetylthreonine mark. K260 bears the N6-acetyllysine mark.

It belongs to the actin family. ARP6 subfamily. In terms of assembly, component of the chromatin-remodeling SRCAP complex composed of at least SRCAP, DMAP1, RUVBL1, RUVBL2, ACTL6A, YEATS4, ACTR6 and ZNHIT1. Interacts with CBX1, CBX3 and CBX5.

Its subcellular location is the cytoplasm. The protein localises to the cytoskeleton. The protein resides in the nucleus. It localises to the nucleolus. Its function is as follows. Required for formation and/or maintenance of proper nucleolar structure and function. Plays a dual role in the regulation of ribosomal DNA (rDNA) transcription. In the presence of high glucose, maintains active rDNA transcription through H2A.Z deposition and under glucose starvation, is required for the repression of rDNA transcription, and this function may be independent of H2A.Z. This Homo sapiens (Human) protein is Actin-related protein 6 (ACTR6).